Consider the following 1177-residue polypeptide: Zinc finger CCCH domain-containing protein 6 (1177 aa).

Basic and acidic residues predominate over residues 1–12 (MTDSEHAGHDRE). 2 disordered regions span residues 1-137 (MTDS…SKEY) and 179-206 (QESSGSSFSKESGKKLRSKGSPPGTEYR). A compositionally biased stretch (acidic residues) spans 13–31 (DGELEDGEIDDAGFEETQD). Residues 27-73 (EETQDQEAKENEKQKNEKAYRKSRKKHKKEREKKKSKRRKHEKHKHN) adopt a coiled-coil conformation. Positions 32–46 (QEAKENEKQKNEKAY) are enriched in basic and acidic residues. A compositionally biased stretch (basic residues) spans 47–73 (RKSRKKHKKEREKKKSKRRKHEKHKHN). The span at 179–188 (QESSGSSFSK) shows a compositional bias: low complexity. 3 C3H1-type zinc fingers span residues 271-297 (KGKQICKYFLEGRCIKGDHCKFNHDAE), 299-326 (EKKKEVCKYYLQGYCTKGENCIYMHSEF), and 327-350 (PCKFYHSGAKCYQGDKCKFSHDDL). A coiled-coil region spans residues 347–383 (HDDLTKETRKLLDKVLNADEELVNEDERELEELRKRG). 8 disordered regions span residues 383-416 (GITPLPKPPPGVGLLPTPSEHFPFSDPEDDFETD), 446-587 (PPAF…ESMQ), 622-654 (QQQPPIARDTAHLGSGPNSSSRMTSHCPLSASG), 670-767 (RYQE…KKPH), 780-826 (PKKL…SERE), 942-988 (EQSG…SSRS), 1043-1101 (DPRD…PVDG), and 1132-1162 (LLRPPYSDPRQAREPGQASPTPDEETDDKPL). Positions 493 to 502 (HPGSPGHHPC) are enriched in low complexity. 2 stretches are compositionally biased toward polar residues: residues 512 to 522 (ENPSLLPSSSE) and 564 to 587 (SSPASLYQQMPSEMQRSADSESMQ). The segment covering 713-728 (RTLQKQTGTLRNQQLP) has biased composition (polar residues). The span at 753–767 (PRLRTVPRQDIKKPH) shows a compositional bias: basic and acidic residues. Basic and acidic residues predominate over residues 955–967 (GDPRLQKNFDPRL). 2 stretches are compositionally biased toward polar residues: residues 1050–1064 (LSATELSTISSGENT) and 1077–1093 (KNQPSPGEVTVPQNTTA). Phosphoserine is present on Ser1150.

This chain is Zinc finger CCCH domain-containing protein 6 (Zc3h6), found in Mus musculus (Mouse).